The chain runs to 256 residues: L-tyrosine degradation gene cluster protein hmgX (256 aa).

The protein belongs to the TTC36 family.

The protein resides in the cytoplasm. Part of the L-tyrosine degradation gene cluster that mediates the biosynthesis of the brownish pigment pyomelanin as an alternative melanin. The 4-hydroxyphenylpyruvate dioxygenase hppD catalyzes the conversion of 4-hydroxyphenylpyruvate to homogentisic acid (HGA). The protein hmgX is crucial for this conversion and thus, probably functions as an accessory factor to mediate specific activity of hppD. The homogentisate 1,2-dioxygenase hmgA is then involved in the cleavage of the aromatic ring of HGA and its conversion to 4-maleylacetoacetate. When hmgA activity is lowered by the cell wall integrity (CWI) signaling pathway, HGA accumulates and leads to the production of pyomelanin through benzoquinone acetic acid after oxidation and polymerization. On the opposite, in non-stress conditions, both hppD and hmgA activities are balanced and HGA is degraded into 4-maleylacetoacetate. 4-maleylacetoacetate is further converted to 4-fumarylacetoacetate by the maleylacetoacetate isomerase maiA, which is degraded into fumarate and acetoacetate by the fumarylacetoacetase fahA. The protein is L-tyrosine degradation gene cluster protein hmgX of Aspergillus fumigatus (strain ATCC MYA-4609 / CBS 101355 / FGSC A1100 / Af293) (Neosartorya fumigata).